We begin with the raw amino-acid sequence, 346 residues long: G-protein coupled receptor homolog U12 (346 aa).

The Extracellular portion of the chain corresponds to 1–31 (MICYSFAKNVTFAFLIILQNFFSQHDEEYKY). A helical transmembrane segment spans residues 32 to 56 (NYTCITPTVRKAQRLESVINGIMLT). Topologically, residues 57–83 (LILPVSTVVICTLLIYYKWTKQTITSP) are cytoplasmic. Residues 84 to 108 (YLITLFISDSLHSLTVLLLTLNREA) traverse the membrane as a helical segment. Over 109–115 (LTNLNQA) the chain is Extracellular. The chain crosses the membrane as a helical span at residues 116-142 (LCQCVLFVYSASCTYSLCMLAVISTIR). The Cytoplasmic portion of the chain corresponds to 143-159 (YRTLQRRTLNDKNNNHI). A helical membrane pass occupies residues 160–181 (KRNVGILFLSSAMCAIPAVLYV). Residues 182-208 (QVEKKKGNYGKCNIHISTQKAYDLFIG) are Extracellular-facing. A helical membrane pass occupies residues 209–229 (IKIVYCFLWGIFPTVIFSYFY). The Cytoplasmic segment spans residues 230 to 245 (VIFGKTLRALTQSKHN). The helical transmembrane segment at 246–272 (KTLSFISLLILSFLCIQIPNLLVMSVE) threads the bilayer. At 273-286 (IFFLYIANTSCLGT) the chain is on the extracellular side. Residues 287 to 310 (IQREIVQIISRLMPEIHCLSNPLV) form a helical membrane-spanning segment. Topologically, residues 311 to 346 (YAFTRTDFRLRFYDFIKCNLCNSSLKRKRNPLTIKN) are cytoplasmic.

Belongs to the G-protein coupled receptor 1 family.

Its subcellular location is the host cell membrane. The sequence is that of G-protein coupled receptor homolog U12 (U12) from Homo sapiens (Human).